Consider the following 388-residue polypeptide: STE20-related kinase adapter protein strd-1 (388 aa).

In terms of domain architecture, Protein kinase spans 52–335 (YDCVRYMGTC…ASDLKSSAWL (284 aa)). ATP contacts are provided by residues 58-66 (MGTCNGGQI) and lysine 82.

The protein belongs to the protein kinase superfamily. STE Ser/Thr protein kinase family. STE20 subfamily. As to quaternary structure, interacts with sad-1. Interacts with par-4. As to expression, expressed in nervous system, pharynx and excretory canal. Expressed in germline.

The protein localises to the perikaryon. It localises to the nucleus. The protein resides in the cell projection. Its subcellular location is the dendrite. It is found in the axon. The protein localises to the synapse. It localises to the cytoplasm. The protein resides in the cell cortex. Its function is as follows. Pseudokinase which may act as an adapter for kinases sad-1 and par-4 and thereby is involved in several developmental processes. Regulates cell-autonomously both neuronal polarity and synaptic organization when bound to sad-1. Required for sad-1 localization to synapses. Required to establish germline stem cell (GSC) quiescence during dauer development, to promote cell shedding during embryogenesis and to control asymmetric cell division of the Q.p neuroblast lineage, probably when bound to par-4. May be involved in maintaining the integrity of the early embryonic cortex when bound to par-4. The sequence is that of STE20-related kinase adapter protein strd-1 from Caenorhabditis elegans.